A 441-amino-acid chain; its full sequence is Methionine aminopeptidase 2A (441 aa).

The tract at residues 1-103 (MAIGNPEVAT…SGDFPQGEIQ (103 aa)) is disordered. Residues 18-33 (AESSNGNESQLSSDLT) show a composition bias toward polar residues. The segment covering 37 to 62 (DLAEVKEDEKDNNQEEEDGLKAEAST) has biased composition (basic and acidic residues). The segment covering 63-76 (KKKKKKSKSKKKKS) has biased composition (basic residues). Position 194 (His194) interacts with substrate. A divalent metal cation is bound by residues Asp214, Asp225, and His294. Substrate is bound at residue His302. A divalent metal cation-binding residues include Glu327 and Glu422.

The protein belongs to the peptidase M24A family. Methionine aminopeptidase eukaryotic type 2 subfamily. The cofactor is Co(2+). It depends on Zn(2+) as a cofactor. Mn(2+) is required as a cofactor. Requires Fe(2+) as cofactor. Ubiquitous. Preferentially expressed in roots.

It is found in the cytoplasm. The catalysed reaction is Release of N-terminal amino acids, preferentially methionine, from peptides and arylamides.. Its function is as follows. Cotranslationally removes the N-terminal methionine from nascent proteins. The N-terminal methionine is often cleaved when the second residue in the primary sequence is small and uncharged (Met-Ala-, Cys, Gly, Pro, Ser, Thr, or Val). In Arabidopsis thaliana (Mouse-ear cress), this protein is Methionine aminopeptidase 2A.